We begin with the raw amino-acid sequence, 520 residues long: Sodium-dependent dicarboxylate transporter SdcS (520 aa).

Transmembrane regions (helical) follow at residues 30–50 (TGQLIGLILGPLLFLLTLLFF), 55–75 (LPWKGVYVLAITLWIATWWIT), 77–97 (AIPIAATSLLPIVLLPLGHIL), 104–124 (SEYGNDIIFLFLGGFILAIAM), 160–180 (SMFVSNTAAVMIMIPIGLAII), 207–227 (IGYAGTIGGLGTLIGTPPLII), 242–262 (FAKWMIVGIPTVIVLLGITWL), 298–318 (KVVQTIFVLASLLWITREFLL), 323–343 (VTSSVADGTIAIFISILLFII), 362–382 (ELPWGVLILFGGGLALAKGIS), 399–419 (GVSPILIVIVITIFVLFLTEV), 428–448 (MILPILATLSVAVGVHPLLLM), 452–472 (AMAANCAYMLPVGTPPNAIIF), and 491–511 (LISAIIIILVVYYIMPIVLGI).

This sequence belongs to the SLC13A/DASS transporter (TC 2.A.47) family. NADC subfamily.

It localises to the cell membrane. Mediates the transport of the dicarboxylates fumarate, malate, and succinate across the cytoplasmic membrane via a Na(+)-electrochemical gradient. In Staphylococcus aureus (strain MRSA252), this protein is Sodium-dependent dicarboxylate transporter SdcS (sdcS).